The sequence spans 257 residues: Deoxyribose-phosphate aldolase (257 aa).

Aspartate 102 serves as the catalytic Proton donor/acceptor. Lysine 166 functions as the Schiff-base intermediate with acetaldehyde in the catalytic mechanism. Lysine 198 functions as the Proton donor/acceptor in the catalytic mechanism.

It belongs to the DeoC/FbaB aldolase family. DeoC type 2 subfamily.

The protein localises to the cytoplasm. The enzyme catalyses 2-deoxy-D-ribose 5-phosphate = D-glyceraldehyde 3-phosphate + acetaldehyde. It participates in carbohydrate degradation; 2-deoxy-D-ribose 1-phosphate degradation; D-glyceraldehyde 3-phosphate and acetaldehyde from 2-deoxy-alpha-D-ribose 1-phosphate: step 2/2. Its function is as follows. Catalyzes a reversible aldol reaction between acetaldehyde and D-glyceraldehyde 3-phosphate to generate 2-deoxy-D-ribose 5-phosphate. This Aeromonas salmonicida (strain A449) protein is Deoxyribose-phosphate aldolase.